Here is a 189-residue protein sequence, read N- to C-terminus: Glutathione-dependent formaldehyde-activating enzyme (189 aa).

The CENP-V/GFA domain occupies 20–166 (FAGGTLVCAC…LRTIGLEPYD (147 aa)). Zn(2+) contacts are provided by Cys-27, Cys-29, Cys-48, Cys-50, Cys-53, Cys-95, and Cys-98.

This sequence belongs to the Gfa family. It depends on Zn(2+) as a cofactor.

The catalysed reaction is S-(hydroxymethyl)glutathione = glutathione + formaldehyde. The protein operates within one-carbon metabolism; formaldehyde degradation; formate from formaldehyde (glutathione route): step 1/3. In terms of biological role, catalyzes the condensation of formaldehyde and glutathione to S-hydroxymethylglutathione. This is Glutathione-dependent formaldehyde-activating enzyme from Mesorhizobium japonicum (strain LMG 29417 / CECT 9101 / MAFF 303099) (Mesorhizobium loti (strain MAFF 303099)).